The following is a 238-amino-acid chain: uncharacterized protein (238 aa).

Belongs to the mimivirus L74/L77/R857 family.

This is an uncharacterized protein from Acanthamoeba polyphaga mimivirus (APMV).